Reading from the N-terminus, the 131-residue chain is MSIRWLFPKLTPRKVARILILLALPIIALTQSQSLRHSQDDAMLHIKPYDGAALPDGFYVYQRLNEKGIAIKSITPEQDSLIVRLASPEQSIAARDVLRLSLPKVTITAQQATTPTPFWQQKLTQKQSKLG.

Topologically, residues 1-14 (MSIRWLFPKLTPRK) are cytoplasmic. Residues 15–31 (VARILILLALPIIALTQ) form a helical membrane-spanning segment. The Periplasmic segment spans residues 32-131 (SQSLRHSQDD…KLTQKQSKLG (100 aa)).

The protein belongs to the MzrA family. In terms of assembly, interacts with EnvZ.

The protein localises to the cell inner membrane. In terms of biological role, modulates the activity of the EnvZ/OmpR two-component regulatory system, probably by directly modulating EnvZ enzymatic activity and increasing stability of phosphorylated OmpR. The chain is Modulator protein MzrA from Pectobacterium carotovorum subsp. carotovorum (strain PC1).